The chain runs to 246 residues: Uridylate kinase (246 aa).

11–14 (KISG) contributes to the ATP binding site. Gly53 is a UMP binding site. 2 residues coordinate ATP: Gly54 and Arg58. UMP contacts are provided by residues Asp74 and 135–142 (TGSPYLTT). 3 residues coordinate ATP: Thr162, Tyr169, and Asp172.

This sequence belongs to the UMP kinase family. As to quaternary structure, homohexamer.

It localises to the cytoplasm. The catalysed reaction is UMP + ATP = UDP + ADP. Its pathway is pyrimidine metabolism; CTP biosynthesis via de novo pathway; UDP from UMP (UMPK route): step 1/1. Its activity is regulated as follows. Inhibited by UTP. Its function is as follows. Catalyzes the reversible phosphorylation of UMP to UDP. This chain is Uridylate kinase, found in Chlamydia abortus (strain DSM 27085 / S26/3) (Chlamydophila abortus).